We begin with the raw amino-acid sequence, 396 residues long: Elongation factor Tu (396 aa).

Residues 10–207 enclose the tr-type G domain; sequence KPHCNIGTIG…VDAYIPQPPR (198 aa). Residues 19-26 form a G1 region; that stretch reads GHVDHGKT. Residue 19–26 coordinates GTP; sequence GHVDHGKT. A Mg(2+)-binding site is contributed by threonine 26. The interval 60 to 64 is G2; the sequence is GITIS. Residues 81–84 are G3; sequence DCPG. GTP-binding positions include 81 to 85 and 136 to 139; these read DCPGH and NKVD. The G4 stretch occupies residues 136–139; it reads NKVD. The interval 174-176 is G5; sequence SAL.

It belongs to the TRAFAC class translation factor GTPase superfamily. Classic translation factor GTPase family. EF-Tu/EF-1A subfamily. In terms of assembly, monomer.

The protein localises to the cytoplasm. It carries out the reaction GTP + H2O = GDP + phosphate + H(+). In terms of biological role, GTP hydrolase that promotes the GTP-dependent binding of aminoacyl-tRNA to the A-site of ribosomes during protein biosynthesis. This is Elongation factor Tu from Novosphingobium aromaticivorans (strain ATCC 700278 / DSM 12444 / CCUG 56034 / CIP 105152 / NBRC 16084 / F199).